We begin with the raw amino-acid sequence, 348 residues long: MRVLTIFLLFMTSIFAVQIKDVANTVGVRDNQLIGYGLVVGLNGSGDGTSSKFTLQSISNLLQGMNIKVDPNDIKSKNTAAVMVTAKLPAFAKSGDKLDITVSSMGDAKSLQGGTLLLTALRGIDGEIYAIAQGSISTGGLTPRPGGAGSHSTAATVMGGANVEREIPQNFSQNSDLTLSLKVADFKTANDIERVLNTVFGEEVAKAIDSRTVKLKKPEDLSNVDFMARVLEQDIAYKPQSKVIIDERTGTVIAGVDVEVEPVLITHKDITIKIDPNNNAVANQNEIDMKDGGFVDPSSNTLRINNAKSTVANIARMLNKLGATPNDIIAIMENLKRAGAINADLEII.

A signal peptide spans 1-16; sequence MRVLTIFLLFMTSIFA.

The protein belongs to the FlgI family. As to quaternary structure, the basal body constitutes a major portion of the flagellar organelle and consists of four rings (L,P,S, and M) mounted on a central rod.

It localises to the periplasm. The protein resides in the bacterial flagellum basal body. Assembles around the rod to form the L-ring and probably protects the motor/basal body from shearing forces during rotation. The polypeptide is Flagellar P-ring protein (Campylobacter jejuni subsp. jejuni serotype O:23/36 (strain 81-176)).